The primary structure comprises 117 residues: Hemerythrin subunit alpha (117 aa).

Fe cation contacts are provided by His24, His53, Glu57, His72, His76, His105, and Asp110.

Belongs to the hemerythrin family. In terms of assembly, octamer composed of two types of chains: alpha and beta.

Hemerythrin is a respiratory protein in blood cells of certain marine worms. The oxygen-binding site in each chain contains two iron atoms. This Lingula anatina (Brachiopod) protein is Hemerythrin subunit alpha.